Reading from the N-terminus, the 299-residue chain is Non-structural protein V (299 aa).

Residues 41–99 (DNPGQERATCREEKAGSSGLSKPCLSAIGSTEGGAPRIRGQGPGESDDDAETLGIPPRN) are disordered. The interaction with host STAT1 stretch occupies residues 110–120 (YYVYDHSGEAV). Residues 134 to 145 (GLDGDSTLSGGD) show a composition bias toward low complexity. The tract at residues 134–168 (GLDGDSTLSGGDNESENSDVDIGEPDTEGYAITDR) is disordered. Residues 146–160 (NESENSDVDIGEPDT) show a composition bias toward acidic residues. Positions 232, 251, 255, 267, 269, 272, 276, and 279 each coordinate Zn(2+).

This sequence belongs to the paramyxoviruses V protein family. Interacts with host IFIH1/MDA5 and DHX58/LGP2; these interactions are involved in the inhibition of the host type I interferon signaling pathway. Interacts with host TYK2; this interaction inhibits the type I interferon signaling pathway without affecting the type II pathway. Interacts with host IRF7; this interaction inhibits IRF7 translocation to the nucleus. Interacts with host CHUK. Interacts with host RELA/p65; this interaction inhibits the nuclear translocation of NF-KappaB. Interacts (via N-terminus) with host STAT1 and JAK1; these interactions inhibit STAT1 phosphorylation by Jak1 and thereby the type I interferon signaling pathway. Interacts (via C-terminus) with host STAT2; this interaction is involved in the inhibition of the host type I interferon signaling pathway. Forms a complex with host PPP1CA and PPP1CC; this interaction prevents dephosphorylation of host IFIH1/MDA5 and leads to the inhibition of the host type I interferon signaling pathway. Interacts with host IRF9; this interaction prevents the binding of IRF9 to STAT2 and thereby the type I interferon signaling pathway. Interacts with host RIGI regulatory protein (via CARDs domain) and host TRIM25 (via SPRY domain); these interactions prevent TRIM25-mediated ubiquitination of RIG-I and disrupts downstream RIG-I signaling.

It localises to the host cytoplasm. Functionally, plays an essential role in the inhibition of host immune response. Prevents the establishment of cellular antiviral state by blocking interferon-alpha/beta (IFN-alpha/beta) production and signaling pathway. Interacts with host IFIH1/MDA5 and DHX58/LGP2 to inhibit the transduction pathway involved in the activation of IFN-beta promoter, thus protecting the virus against cell antiviral state. Blocks the type I interferon signaling pathway by interacting with host TYK2 and thereby inhibiting downstream STAT1 and STAT2 phosphorylation. Blocks the type I interferon signaling pathway by disrupting the RIG-I signaling pathway. Moderately affects the type II interferon signaling. Prevents PP1alpha/gamma-mediated dephosphorylation of host IFIH1/MDA5 and thus blocks its activation. The polypeptide is Non-structural protein V (P/V) (Measles virus (strain Edmonston) (MeV)).